The chain runs to 577 residues: Adenine deaminase (577 aa).

It belongs to the metallo-dependent hydrolases superfamily. Adenine deaminase family. Mn(2+) serves as cofactor.

The enzyme catalyses adenine + H2O + H(+) = hypoxanthine + NH4(+). The sequence is that of Adenine deaminase (adeC) from Bacillus subtilis (strain 168).